Consider the following 363-residue polypeptide: 3-dehydroquinate synthase (363 aa).

NAD(+)-binding positions include 72–77, 130–131, Lys142, and Lys151; these read SGEKEK and TT. Zn(2+)-binding residues include Glu184, His247, and His264.

It belongs to the sugar phosphate cyclases superfamily. Dehydroquinate synthase family. Co(2+) serves as cofactor. The cofactor is Zn(2+). NAD(+) is required as a cofactor.

It is found in the cytoplasm. It catalyses the reaction 7-phospho-2-dehydro-3-deoxy-D-arabino-heptonate = 3-dehydroquinate + phosphate. The protein operates within metabolic intermediate biosynthesis; chorismate biosynthesis; chorismate from D-erythrose 4-phosphate and phosphoenolpyruvate: step 2/7. Catalyzes the conversion of 3-deoxy-D-arabino-heptulosonate 7-phosphate (DAHP) to dehydroquinate (DHQ). The chain is 3-dehydroquinate synthase from Bacillus thuringiensis (strain Al Hakam).